Consider the following 299-residue polypeptide: Ophiobolin family sesterterpenoid biosynthesis cluster acetyltransferase (299 aa).

The first 20 residues, 1 to 20 (MYFFRALLSPVVLWPALVSG), serve as a signal peptide directing secretion. N-linked (GlcNAc...) asparagine glycans are attached at residues N28, N58, N77, N126, N177, N212, and N282.

The protein belongs to the bfoA family.

The protein operates within secondary metabolite biosynthesis; terpenoid biosynthesis. Acetyltransferase; part of the gene cluster that mediates the biosynthesis of an ophiobolin family sesterterpenoid. Functionally, sesterterpenoid synthase; part of the gene cluster that mediates the biosynthesis of an ophiobolin family sesterterpenoid. The protein is Ophiobolin family sesterterpenoid biosynthesis cluster acetyltransferase of Aspergillus terreus.